A 720-amino-acid polypeptide reads, in one-letter code: Mitogen-activated protein kinase 6 (720 aa).

Residue methionine 1 forms a Peptide (Met-Gly) (interchain with G-Cter in ubiquitin) linkage. The Protein kinase domain occupies 20 to 316; that stretch reads YMDLKPLGCG…AEEALSHPYM (297 aa). Residues 26–34 and lysine 49 contribute to the ATP site; that span reads LGCGGNGLV. The active-site Proton acceptor is aspartate 152. The residue at position 189 (serine 189) is a Phosphoserine; by PAK1, PAK2 and PAK3. The SEG motif motif lies at 189–191; the sequence is SEG. Residues 332–337 carry the FRIEDE motif motif; sequence FHIEDE. Phosphoserine occurs at positions 386, 452, 554, and 556. The tract at residues 638-657 is disordered; the sequence is SEMLETEPVEEGKRGERGRE. Residues 647–657 are compositionally biased toward basic and acidic residues; sequence EEGKRGERGRE. Serine 683 is subject to Phosphoserine. Residues 698 to 714 are compositionally biased toward polar residues; it reads PSAMKSSPQIPHKTYSN. The disordered stretch occupies residues 698-720; the sequence is PSAMKSSPQIPHKTYSNILKHLN.

Belongs to the protein kinase superfamily. CMGC Ser/Thr protein kinase family. MAP kinase subfamily. In terms of assembly, heterodimer with ERK4/MAPK4. Interacts with (via FRIEDE motif) MAPKAPK5. Interacts with UBE3A; this interaction may be indirect and mediated by HERC2, possibly via HERC2 interaction with NEURL4. It depends on Mg(2+) as a cofactor. Phosphorylated at Ser-189 by PAK1, PAK2 and PAK3 resulting in catalytic activation. Phosphorylated by MAPKAPK5 at other sites. Post-translationally, ubiquitination at Met-1 leads to degradation by the proteasome pathway. As to expression, highest levels within the nervous system, expressed in different tissues, mostly in skeletal muscle.

The protein resides in the cytoplasm. The protein localises to the nucleus. The enzyme catalyses L-seryl-[protein] + ATP = O-phospho-L-seryl-[protein] + ADP + H(+). The catalysed reaction is L-threonyl-[protein] + ATP = O-phospho-L-threonyl-[protein] + ADP + H(+). Activated by phosphorylation at Ser-189. Atypical MAPK protein. Phosphorylates microtubule-associated protein 2 (MAP2) and MAPKAPK5. The precise role of the complex formed with MAPKAPK5 is still unclear, but the complex follows a complex set of phosphorylation events: upon interaction with atypical MAPKAPK5, ERK3/MAPK6 is phosphorylated at Ser-189 and then mediates phosphorylation and activation of MAPKAPK5, which in turn phosphorylates ERK3/MAPK6. May promote entry in the cell cycle. The sequence is that of Mitogen-activated protein kinase 6 (Mapk6) from Rattus norvegicus (Rat).